Consider the following 161-residue polypeptide: Periplasmic chaperone Spy (161 aa).

The signal sequence occupies residues Met-1–Ala-23. The interval Ala-140–Glu-161 is disordered. Residues Phe-142–Ala-151 are compositionally biased toward basic and acidic residues.

Belongs to the CpxP/Spy family. Homodimer.

It localises to the periplasm. An ATP-independent periplasmic chaperone, decreases protein aggregation and helps protein refolding. Binds substrate over a large region of its convex inner surface. Substrate protein folds while it is bound to chaperone. Increasing Spy flexibility increases its substrate affinity and overall chaperone activity (shown for 3 different substrates). Protects proteins in vitro against tannin inactivation; tannins have antimicrobial activity. Overexpression enhances the stability of otherwise unstable periplasmic proteins. This is Periplasmic chaperone Spy from Escherichia coli (strain K12).